Consider the following 646-residue polypeptide: Zinc finger protein 503 (646 aa).

The segment covering 1–11 (MSTAPSLSALR) has biased composition (polar residues). The segment at 1 to 70 (MSTAPSLSAL…PPSDPLRQAN (70 aa)) is disordered. The segment covering 16-28 (SGGGGGGGGGGGA) has biased composition (gly residues). The segment covering 34–52 (SALSGNSSGPGPGSSPAGS) has biased composition (low complexity). The residue at position 102 (serine 102) is a Phosphoserine. The tract at residues 121–332 (SQIGKPDPSP…PSAPTSSSVL (212 aa)) is disordered. Over residues 130 to 139 (PSSKLSSVAS) the composition is skewed to low complexity. Composition is skewed to gly residues over residues 140–152 (NGGGAGGAGGGAA) and 189–205 (GGGGGGGGGGGGGGGGV). An N6-acetyllysine modification is found at lysine 209. A compositionally biased stretch (polar residues) spans 217–226 (ATCQPFTPRT). Residues 227 to 240 (GSPSSSASACSPGG) are compositionally biased toward low complexity. Serine 231 and serine 237 each carry phosphoserine. Over residues 250 to 259 (EGKDDKKDTD) the composition is skewed to basic and acidic residues. Gly residues-rich tracts occupy residues 260–277 (VGGGGKGTGGASAEGGPT) and 300–315 (GGPGGKALGSDCGGSS). Residues 316 to 330 (GSSSGSGPSAPTSSS) are compositionally biased toward low complexity. The segment at 514–542 (HICNWVSANGPCDKRFATSEELLSHLRTH) adopts a C2H2-type zinc-finger fold. Arginine 636 is subject to Omega-N-methylarginine.

It belongs to the Elbow/Noc family.

It localises to the nucleus. Functionally, may function as a transcriptional repressor. This Homo sapiens (Human) protein is Zinc finger protein 503 (ZNF503).